A 254-amino-acid chain; its full sequence is 23S rRNA (guanosine-2'-O-)-methyltransferase RlmB (254 aa).

Glycine 198, isoleucine 218, and leucine 227 together coordinate S-adenosyl-L-methionine.

This sequence belongs to the class IV-like SAM-binding methyltransferase superfamily. RNA methyltransferase TrmH family. RlmB subfamily. Homodimer.

The protein resides in the cytoplasm. It catalyses the reaction guanosine(2251) in 23S rRNA + S-adenosyl-L-methionine = 2'-O-methylguanosine(2251) in 23S rRNA + S-adenosyl-L-homocysteine + H(+). In terms of biological role, specifically methylates the ribose of guanosine 2251 in 23S rRNA. This is 23S rRNA (guanosine-2'-O-)-methyltransferase RlmB from Blochmanniella floridana.